Consider the following 96-residue polypeptide: Co-chaperonin GroES (96 aa).

This sequence belongs to the GroES chaperonin family. Heptamer of 7 subunits arranged in a ring. Interacts with the chaperonin GroEL.

It is found in the cytoplasm. Functionally, together with the chaperonin GroEL, plays an essential role in assisting protein folding. The GroEL-GroES system forms a nano-cage that allows encapsulation of the non-native substrate proteins and provides a physical environment optimized to promote and accelerate protein folding. GroES binds to the apical surface of the GroEL ring, thereby capping the opening of the GroEL channel. The chain is Co-chaperonin GroES from Polynucleobacter necessarius subsp. necessarius (strain STIR1).